The primary structure comprises 161 residues: RNA pyrophosphohydrolase (161 aa).

Residues 12–154 (PYRPGVGMMI…KRKLYQAVVK (143 aa)) form the Nudix hydrolase domain. The Nudix box motif lies at 46–67 (GGIVPGETPSIAAMREMLEEIG).

Belongs to the Nudix hydrolase family. RppH subfamily. It depends on a divalent metal cation as a cofactor.

In terms of biological role, accelerates the degradation of transcripts by removing pyrophosphate from the 5'-end of triphosphorylated RNA, leading to a more labile monophosphorylated state that can stimulate subsequent ribonuclease cleavage. The sequence is that of RNA pyrophosphohydrolase from Rickettsia typhi (strain ATCC VR-144 / Wilmington).